Consider the following 95-residue polypeptide: Large ribosomal subunit protein eL42 (95 aa).

4 residues coordinate Zn(2+): Cys11, Cys14, Cys71, and Cys74. The C4-type zinc finger occupies Cys11–Cys74.

This sequence belongs to the eukaryotic ribosomal protein eL42 family. Part of the 50S ribosomal subunit. The cofactor is Zn(2+).

Binds to the 23S rRNA. In Aeropyrum pernix (strain ATCC 700893 / DSM 11879 / JCM 9820 / NBRC 100138 / K1), this protein is Large ribosomal subunit protein eL42.